The sequence spans 618 residues: MERAVEPWGPDLHRPEEREPQRGARTGLGSENVISQPNEFEHTPQEDDLGFKEEDLAPDHEVGNASLKPEGIQNWDDLWVQREGLGKPQPRDRGPRLLGEPRWGQASSDRAAVCGECGKSFRQMSDLVKHQRTHTGEKPYKCGVCGKGFGDSSARIKHQRTHSGEKPYRARPPAQGPPKIPRSRIPAGERPTICGECGKSFRQSSDLVKHQRTHTGEKPYKCGICGKGFGDSSARIKHQRTHRGEQPPRPVVPRRQPSRAATAATQGPKAQDKPYICTDCGKRFVLSCSLLSHQRSHLGPKPFGCDVCGKEFARGSDLVKHLRVHTGEKPYLCPECGKGFADSSARVKHLRTHSGERPHACPECDRTFSLSSTLLRHRLTHMEPQDFSFPGYPLPALIPSPPPPPLGTSPPLTPRSPSHSGEPFGLPGLEPEPGGPQAGEPPPPLAGDKPHKCPECGKGFRRSSDLVKHHRVHTGEKPYLCPECGKGFADSSARVKHLRTHRGERARPPPPSTLLRPHNPPGPVPMAPRPRVRAQPSGPSQPHVCGFCGKEFPRSSDLVKHRRTHTGEKPYKCAECGKGFGDSSARIKHQRGHLVLTPFGIGDGRARPLKQEAATGLE.

Methionine 1 is subject to N-acetylmethionine. Basic and acidic residues-rich tracts occupy residues 1–22 and 39–51; these read MERA…EPQR and EFEH…DLGF. Disordered regions lie at residues 1–51 and 78–109; these read MERA…DLGF and LWVQ…ASSD. Residue lysine 87 forms a Glycyl lysine isopeptide (Lys-Gly) (interchain with G-Cter in SUMO2) linkage. C2H2-type zinc fingers lie at residues 112–134 and 140–162; these read AVCG…QRTH and YKCG…QRTH. A disordered region spans residues 157 to 189; it reads KHQRTHSGEKPYRARPPAQGPPKIPRSRIPAGE. Lysine 179 is covalently cross-linked (Glycyl lysine isopeptide (Lys-Gly) (interchain with G-Cter in SUMO2)). 2 consecutive C2H2-type zinc fingers follow at residues 192–214 and 220–242; these read TICG…QRTH and YKCG…QRTH. A disordered region spans residues 235–271; it reads RIKHQRTHRGEQPPRPVVPRRQPSRAATAATQGPKAQ. Residue lysine 269 forms a Glycyl lysine isopeptide (Lys-Gly) (interchain with G-Cter in SUMO2) linkage. 2 C2H2-type zinc fingers span residues 275–297 and 303–325; these read YICT…QRSH and FGCD…LRVH. Lysine 329 is covalently cross-linked (Glycyl lysine isopeptide (Lys-Gly) (interchain with G-Cter in SUMO2)). C2H2-type zinc fingers lie at residues 331-353 and 359-381; these read YLCP…LRTH and HACP…RLTH. Residues 392–414 are compositionally biased toward pro residues; sequence YPLPALIPSPPPPPLGTSPPLTP. The disordered stretch occupies residues 392-457; sequence YPLPALIPSP…DKPHKCPECG (66 aa). Positions 415-432 are enriched in low complexity; the sequence is RSPSHSGEPFGLPGLEPE. The C2H2-type 9 zinc-finger motif lies at 451 to 473; the sequence is HKCPECGKGFRRSSDLVKHHRVH. Residue lysine 477 forms a Glycyl lysine isopeptide (Lys-Gly) (interchain with G-Cter in SUMO2) linkage. The segment at 479-501 adopts a C2H2-type 10 zinc-finger fold; that stretch reads YLCPECGKGFADSSARVKHLRTH. The disordered stretch occupies residues 500–540; the sequence is THRGERARPPPPSTLLRPHNPPGPVPMAPRPRVRAQPSGPS. Positions 508-528 are enriched in pro residues; that stretch reads PPPPSTLLRPHNPPGPVPMAP. C2H2-type zinc fingers lie at residues 543–565 and 571–593; these read HVCG…RRTH and YKCA…QRGH. A Glycyl lysine isopeptide (Lys-Gly) (interchain with G-Cter in SUMO2) cross-link involves residue lysine 610.

The protein belongs to the krueppel C2H2-type zinc-finger protein family.

The protein resides in the nucleus. Its function is as follows. May be involved in transcriptional regulation. The protein is Zinc finger protein 48 (ZNF48) of Homo sapiens (Human).